Here is a 422-residue protein sequence, read N- to C-terminus: F-box/kelch-repeat protein At3g27150 (422 aa).

The 47-residue stretch at 68 to 114 (LLNVPQLVYELEVEILARVPRFEYWKLKLLNKGFSRLLKSDEIFKVR) folds into the F-box domain. 5 Kelch repeats span residues 162-212 (ESLC…TCGT), 213-264 (VVFV…YLRG), 266-312 (FYVL…SPPL), 314-361 (AVVG…VAFK), and 366-412 (KLLV…RFNH).

This Arabidopsis thaliana (Mouse-ear cress) protein is F-box/kelch-repeat protein At3g27150.